A 329-amino-acid chain; its full sequence is Ketol-acid reductoisomerase (NADP(+)) (329 aa).

In terms of domain architecture, KARI N-terminal Rossmann spans 2 to 182; that stretch reads TQLFYDTDAD…GGTRAGILET (181 aa). NADP(+) is bound by residues 25–28, serine 51, serine 53, and 83–86; these read YGSQ and DEFQ. Histidine 108 is a catalytic residue. Glycine 134 contributes to the NADP(+) binding site. The 146-residue stretch at 183-328 folds into the KARI C-terminal knotted domain; sequence NFKEETETDL…KGLRAMFSWL (146 aa). The Mg(2+) site is built by aspartate 191, glutamate 195, glutamate 227, and glutamate 231. Serine 252 is a binding site for substrate.

This sequence belongs to the ketol-acid reductoisomerase family. Mg(2+) serves as cofactor.

It carries out the reaction (2R)-2,3-dihydroxy-3-methylbutanoate + NADP(+) = (2S)-2-acetolactate + NADPH + H(+). The catalysed reaction is (2R,3R)-2,3-dihydroxy-3-methylpentanoate + NADP(+) = (S)-2-ethyl-2-hydroxy-3-oxobutanoate + NADPH + H(+). Its pathway is amino-acid biosynthesis; L-isoleucine biosynthesis; L-isoleucine from 2-oxobutanoate: step 2/4. It functions in the pathway amino-acid biosynthesis; L-valine biosynthesis; L-valine from pyruvate: step 2/4. Involved in the biosynthesis of branched-chain amino acids (BCAA). Catalyzes an alkyl-migration followed by a ketol-acid reduction of (S)-2-acetolactate (S2AL) to yield (R)-2,3-dihydroxy-isovalerate. In the isomerase reaction, S2AL is rearranged via a Mg-dependent methyl migration to produce 3-hydroxy-3-methyl-2-ketobutyrate (HMKB). In the reductase reaction, this 2-ketoacid undergoes a metal-dependent reduction by NADPH to yield (R)-2,3-dihydroxy-isovalerate. The protein is Ketol-acid reductoisomerase (NADP(+)) of Prochlorococcus marinus subsp. pastoris (strain CCMP1986 / NIES-2087 / MED4).